The following is a 142-amino-acid chain: Small ribosomal subunit protein bS6 (142 aa).

Residues 110 to 133 (NKKPSHAKEKHEKTEHTHSHHAEE) are compositionally biased toward basic and acidic residues. Residues 110–142 (NKKPSHAKEKHEKTEHTHSHHAEEAESVGSHSE) are disordered.

The protein belongs to the bacterial ribosomal protein bS6 family.

Functionally, binds together with bS18 to 16S ribosomal RNA. The chain is Small ribosomal subunit protein bS6 from Helicobacter pylori (strain P12).